Here is a 35-residue protein sequence, read N- to C-terminus: Photosystem II reaction center protein T (35 aa).

Residues 3–23 (ALVYTFLLVSTLGIIFFAIFF) form a helical membrane-spanning segment.

Belongs to the PsbT family. PSII is composed of 1 copy each of membrane proteins PsbA, PsbB, PsbC, PsbD, PsbE, PsbF, PsbH, PsbI, PsbJ, PsbK, PsbL, PsbM, PsbT, PsbY, PsbZ, Psb30/Ycf12, at least 3 peripheral proteins of the oxygen-evolving complex and a large number of cofactors. It forms dimeric complexes.

It is found in the plastid. It localises to the chloroplast thylakoid membrane. In terms of biological role, found at the monomer-monomer interface of the photosystem II (PS II) dimer, plays a role in assembly and dimerization of PSII. PSII is a light-driven water plastoquinone oxidoreductase, using light energy to abstract electrons from H(2)O, generating a proton gradient subsequently used for ATP formation. The chain is Photosystem II reaction center protein T from Amborella trichopoda.